We begin with the raw amino-acid sequence, 292 residues long: Medium chain reductase/dehydrogenase ucsI (292 aa).

Residue Cys43 coordinates Zn(2+). Tyr49 contacts substrate. Residues His65 and Glu66 each coordinate Zn(2+). NAD(+)-binding positions include 184 to 189 (GCGPVG), Asp208, Arg213, and 276 to 278 (IGA).

The protein belongs to the zinc-containing alcohol dehydrogenase family. It depends on Zn(2+) as a cofactor.

It functions in the pathway mycotoxin biosynthesis. Functionally, medium chain reductase/dehydrogenase; part of the gene cluster that mediates the biosynthesis of UCS1025A, a member of the pyrrolizidinone family that acts as a strong telomerase inhibitor and displays potent antibacterial and antitumor properties. These compounds share a hemiaminal-containing pyrrolizidinone core fused with a gamma-lactone, giving a furopyrrolizidine that is connected to a decalin fragment. The polyketide synthase module (PKS) of the PKS-NRPS ucsA is responsible for the synthesis of the polyketide backbone via the condensation of an acetyl-CoA starter unit with 6 malonyl-CoA units. The downstream nonribosomal peptide synthetase (NRPS) module then amidates the carboxyl end of the polyketide with a 2S,3S-methylproline derived from L-isoleucine by the 2-oxoglutarate-dependent dioxygenase ucsF which converts L-isoleucine to (4S,5S)-4-methylpyrroline-5-carboxylate that is further converted to 2S,3S-methylproline by the pyrroline-5-carboxylate reductase ucsG. Reductive release of the completed aminoacyl polyketide from the assembly line can form the 3-pyrrolin-2-one structure via an intramolecular Knoevenagel reaction. Because ucsA lacks a designated enoylreductase (ER) domain, the required activity is provided the enoyl reductase ucsL. This keto acyclic precursor is the substrate of the Diels-Alderase ucsH, that catalyzes the Diels-Alder cycloaddition. Oxidation of the 3S-methyl group to a carboxylate by the cytochrome P450 monooxygenase ucsK allows an oxa-Michael cyclization that might involve the reductase/dehydrogenase ucsI and which furnishes the furopyrrolizidine. The oxidase ucsJ likely plays a critical role in stereoselective reduction of the C5-C6 double bond to afford the required R-configured carboxylate group. Further enolization and oxidation at C5 by an unidentified enzyme affords the last intermediate that can undergo oxa-Michael cyclization to yield UCS1025A. In Acremonium sp, this protein is Medium chain reductase/dehydrogenase ucsI.